Reading from the N-terminus, the 768-residue chain is Cullin-3 (768 aa).

At Ser2 the chain carries N-acetylserine. The segment at 2–41 (SNLSKGTGSRKDTKMRIRAFPMTMDEKYVNSIWDLLKNAI) is interaction with KLHL18. Ser585 is subject to Phosphoserine. Residues 677–698 (VAAKQGESDPERKETRQKVDDD) form a disordered region. Residues 682–698 (GESDPERKETRQKVDDD) are compositionally biased toward basic and acidic residues. Positions 698 to 760 (DRKHEIEAAI…REYLARTPED (63 aa)) constitute a Cullin neddylation domain. Residue Lys712 forms a Glycyl lysine isopeptide (Lys-Gly) (interchain with G-Cter in NEDD8) linkage.

This sequence belongs to the cullin family. In terms of assembly, forms neddylation-dependent homodimers. Component of multiple BCR (BTB-CUL3-RBX1) E3 ubiquitin-protein ligase complexes formed of CUL3, RBX1 and a variable BTB domain-containing protein acting as both, adapter to cullin and substrate recognition subunit. The BCR complex may be active as a heterodimeric complex, in which NEDD8, covalently attached to one CUL3 molecule, binds to the C-terminus of a second CUL3 molecule. Interacts with RBX1, RNF7 and TIP120A/CAND1. Part of the BCR(SPOP) containing SPOP, and of BCR containing homodimeric SPOPL or the heterodimer formed by SPOP and SPOPL. Part of the probable BCR(KLHL9-KLHL13) complex with BTB domain proteins KLHL9 and KLHL13. Part of the BCR(KLHL41) complex containing KLHL41. Component of the BCR(KLHL12) E3 ubiquitin ligase complex, at least composed of CUL3 and KLHL12 and RBX1. Component of the BCR(KLHL3) E3 ubiquitin ligase complex, at least composed of CUL3 and KLHL3 and RBX1. Part of the BCR(ENC1) complex containing ENC1. Part of a complex consisting of BMI1/PCGF4, CUL3 and SPOP. Part of a complex consisting of BRMS1, CUL3 and SPOP. Component of the BCR(KLHL21) E3 ubiquitin ligase complex, at least composed of CUL3, KLHL21 and RBX1. Component of the BCR(KLHL22) E3 ubiquitin ligase complex, at least composed of CUL3, KLHL22 and RBX1. Component of the BCR(KLHL25) E3 ubiquitin ligase complex, at least composed of CUL3, KLHL25 and RBX1. Part of a complex consisting of MACROH2A1, CUL3 and SPOP. Component of the BCR(KLHL42) E3 ubiquitin ligase complex, at least composed of CUL3 and KLHL42. Component of the BCR(KBTBD8) E3 ubiquitin ligase complex, at least composed of CUL3, KBTBD8 and RBX1. Interacts with KLHL42 (via the BTB domain). Interacts with KATNA1; the interaction is enhanced by KLHL42. Interacts with KCTD5, KLHL9, KLHL11, KLHL13, GAN, ZBTB16, KLHL3, KLHL15, KLHL20, KLHL36, GMCL2, BTBD1. Part of a complex that contains CUL3, RBX1 and GAN. Interacts (via BTB domain) with KLHL17; the interaction regulates surface GRIK2 expression. Interacts with KCTD7. Part of the BCR(GAN) complex containing GAN. Part of the BCR(KEAP1) complex containing KEAP1. Interacts with KAT5 and ATF2. Interacts with KCTD17 in the BCR(KCTD17) E3 ubiquitin ligase complex, at least composed of CUL3, KCTD17 and RBX1. Interacts (when neddylated) with ARIH1; leading to activate the E3 ligase activity of ARIH1. Interacts with COPS9. Interacts with PPP2R5B; this interaction is indirect and mediated through KLHL15-binding and leads to PPP2R5B proteasomal degradation. Interacts with RBBP8/CtIP; this interaction is indirect and mediated through KLHL15-binding and leads to RBBP8 proteasomal degradation. Interacts with KLHL24 in the BCR(KLHL24) E3 ubiquitin ligase complex, composed of CUL3, RBX1 and KLHL24. Interacts with RHOBTB2. Interacts with CYCE. Interacts with KLHL10. Interacts with AURKA and KLHL18 (via BTB domain). Interacts (unneddylated form) with DCUN1D1, DCUN1D2, DCUN1D3, DCUN1D4 and DCUN1D5; these interactions promote the cullin neddylation. Component of a BCR3 (BTB-CUL3-RBX1) E3 ubiquitin ligase complex, also named Cul3-RING ubiquitin ligase complex CUL3(KBTBD6/7), composed of CUL3, RBX1, KBTBD6 and KBTBD7. Component of the BCR(KBTBD2) E3 ubiquitin ligase complex, at least composed of CUL3, KBTBD2 and RBX1. Interacts with KBTBD2 (via the BTB domain). Component of the BCR(KBTBD4) E3 ubiquitin ligase complex, at least composed of CUL3, KBTBD4 and RBX1. Post-translationally, neddylated. Attachment of NEDD8 is required for the E3 ubiquitin-protein ligase activity of the BCR complex. Deneddylated via its interaction with the COP9 signalosome (CSN) complex. Widely expressed, with highest expression in brain, spleen and testis. In the testis, it is mainly expressed in spermatids.

It localises to the nucleus. The protein resides in the golgi apparatus. Its subcellular location is the cell projection. The protein localises to the cilium. It is found in the flagellum. It localises to the cytoplasm. The protein resides in the cytoskeleton. Its subcellular location is the spindle. The protein localises to the microtubule organizing center. It is found in the centrosome. It localises to the spindle pole. The protein operates within protein modification; protein ubiquitination. Core component of multiple cullin-RING-based BCR (BTB-CUL3-RBX1) E3 ubiquitin-protein ligase complexes which mediate the ubiquitination and subsequent proteasomal degradation of target proteins. BCR complexes and ARIH1 collaborate in tandem to mediate ubiquitination of target proteins. As a scaffold protein may contribute to catalysis through positioning of the substrate and the ubiquitin-conjugating enzyme. The E3 ubiquitin-protein ligase activity of the complex is dependent on the neddylation of the cullin subunit and is inhibited by the association of the deneddylated cullin subunit with TIP120A/CAND1. The functional specificity of the BCR complex depends on the BTB domain-containing protein as the substrate recognition component. BCR(KLHL42) is involved in ubiquitination of KATNA1. BCR(SPOP) is involved in ubiquitination of BMI1/PCGF4, BRMS1, MACROH2A1 and DAXX, GLI2 and GLI3. Can also form a cullin-RING-based BCR (BTB-CUL3-RBX1) E3 ubiquitin-protein ligase complex containing homodimeric SPOPL or the heterodimer formed by SPOP and SPOPL; these complexes have lower ubiquitin ligase activity. BCR(KLHL9-KLHL13) controls the dynamic behavior of AURKB on mitotic chromosomes and thereby coordinates faithful mitotic progression and completion of cytokinesis. BCR(KLHL12) is involved in ER-Golgi transport by regulating the size of COPII coats, thereby playing a key role in collagen export, which is required for embryonic stem (ES) cells division: BCR(KLHL12) acts by mediating monoubiquitination of SEC31 (SEC31A or SEC31B). BCR(KLHL3) acts as a regulator of ion transport in the distal nephron; by mediating ubiquitination of WNK4. The BCR(KLHL20) E3 ubiquitin ligase complex is involved in interferon response and anterograde Golgi to endosome transport: it mediates both ubiquitination leading to degradation and 'Lys-33'-linked ubiquitination. The BCR(KLHL21) E3 ubiquitin ligase complex regulates localization of the chromosomal passenger complex (CPC) from chromosomes to the spindle midzone in anaphase and mediates the ubiquitination of AURKB. The BCR(KLHL22) ubiquitin ligase complex mediates monoubiquitination of PLK1, leading to PLK1 dissociation from phosphoreceptor proteins and subsequent removal from kinetochores, allowing silencing of the spindle assembly checkpoint (SAC) and chromosome segregation. The BCR(KLHL22) ubiquitin ligase complex is also responsible for the amino acid-stimulated 'Lys-48' polyubiquitination and proteasomal degradation of DEPDC5. Through the degradation of DEPDC5, releases the GATOR1 complex-mediated inhibition of the TORC1 pathway. The BCR(KLHL25) ubiquitin ligase complex is involved in translational homeostasis by mediating ubiquitination and subsequent degradation of hypophosphorylated EIF4EBP1 (4E-BP1). The BCR(KLHL25) ubiquitin ligase complex is also involved in lipid synthesis by mediating ubiquitination and degradation of ACLY. The BCR(KBTBD8) complex acts by mediating monoubiquitination of NOLC1 and TCOF1, leading to remodel the translational program of differentiating cells in favor of neural crest specification. Involved in ubiquitination of cyclin E and of cyclin D1 (in vitro) thus involved in regulation of G1/S transition. Involved in the ubiquitination of KEAP1, ENC1 and KLHL41. In concert with ATF2 and RBX1, promotes degradation of KAT5 thereby attenuating its ability to acetylate and activate ATM. The BCR(KCTD17) E3 ubiquitin ligase complex mediates ubiquitination and degradation of TCHP, a down-regulator of cilium assembly, thereby inducing ciliogenesis. The BCR(KLHL24) E3 ubiquitin ligase complex mediates ubiquitination of KRT14, controls KRT14 levels during keratinocytes differentiation, and is essential for skin integrity. The BCR(KLHL18) E3 ubiquitin ligase complex mediates the ubiquitination of AURKA leading to its activation at the centrosome which is required for initiating mitotic entry. The BCR(KEAP1) E3 ubiquitin ligase complex acts as a key sensor of oxidative and electrophilic stress by mediating ubiquitination and degradation of NFE2L2/NRF2, a transcription factor regulating expression of many cytoprotective genes. As part of the CUL3(KBTBD6/7) E3 ubiquitin ligase complex functions mediates 'Lys-48' ubiquitination and proteasomal degradation of TIAM1. By controlling the ubiquitination of that RAC1 guanine exchange factors (GEF), regulates RAC1 signal transduction and downstream biological processes including the organization of the cytoskeleton, cell migration and cell proliferation. The BCR(KBTBD4) E3 ubiquitin ligase complex targets CoREST corepressor complex components RCOR1, KDM1A/LSD1 and HDAC2 for proteasomal degradation with RCOR1 likely to be the primary target while degradation of KDM1A and HDAC2 is likely due to their association with RCOR1. It also targets RCOR3, MIER2 and MIER3 for proteasomal degradation as well as associated proteins ZNF217 and RREB1 with degradation being dependent on the presence of an ELM2 domain in the target proteins. The BCR(ARMC5) complex mediates premature transcription termination of transcripts that are unfavorably configured for transcriptional elongation by mediating ubiquitination of Pol II subunit POLR2A. Required for 'Lys-63'-linked ubiquitination of large ribosomal subunit protein MRPL12. This Mus musculus (Mouse) protein is Cullin-3 (Cul3).